The following is a 481-amino-acid chain: Aspartyl/glutamyl-tRNA(Asn/Gln) amidotransferase subunit B (481 aa).

Belongs to the GatB/GatE family. GatB subfamily. Heterotrimer of A, B and C subunits.

It catalyses the reaction L-glutamyl-tRNA(Gln) + L-glutamine + ATP + H2O = L-glutaminyl-tRNA(Gln) + L-glutamate + ADP + phosphate + H(+). The catalysed reaction is L-aspartyl-tRNA(Asn) + L-glutamine + ATP + H2O = L-asparaginyl-tRNA(Asn) + L-glutamate + ADP + phosphate + 2 H(+). Functionally, allows the formation of correctly charged Asn-tRNA(Asn) or Gln-tRNA(Gln) through the transamidation of misacylated Asp-tRNA(Asn) or Glu-tRNA(Gln) in organisms which lack either or both of asparaginyl-tRNA or glutaminyl-tRNA synthetases. The reaction takes place in the presence of glutamine and ATP through an activated phospho-Asp-tRNA(Asn) or phospho-Glu-tRNA(Gln). This is Aspartyl/glutamyl-tRNA(Asn/Gln) amidotransferase subunit B from Pseudomonas syringae pv. syringae (strain B728a).